The primary structure comprises 345 residues: NADH-quinone oxidoreductase subunit H (345 aa).

Residues 1–15 (MADFWATSLGQTLIL) lie on the Lumenal side of the membrane. The chain crosses the membrane as a helical span at residues 16–35 (LAQGLGIIAFVMIGLLLLVW). Topologically, residues 36–86 (GDRKIWAAVQMRKGPNVVGAFGLLQSVADAAKYVFKEIVVPAGVDKPVYFL) are cytoplasmic. The chain crosses the membrane as a helical span at residues 87–106 (APMLSLVLALLAWVVVPFNE). Topologically, residues 107–110 (GWVM) are lumenal. A helical membrane pass occupies residues 111–130 (ADINVAVLFVFAVSSLEVYG). Over 131-156 (VIMGGWASNSKYPFLGSLRSAAQMIS) the chain is Cytoplasmic. Residues 157–176 (YEVSMGLIIVGVIISTGSMN) traverse the membrane as a helical segment. The Lumenal segment spans residues 177-191 (LSAIVEAQRGDFGLL). A helical transmembrane segment spans residues 192–211 (NWYWLPHLPMVALFFISALA). Residues 212-245 (ETNRPPFDLPEAESELVAGFMVEYSSTPYLLFMA) lie on the Cytoplasmic side of the membrane. Residues 246 to 265 (GEYIAVWLMCALTSVLFFGG) form a helical membrane-spanning segment. At 266–276 (WLSPIPGVPDG) the chain is on the lumenal side. A helical membrane pass occupies residues 277-296 (VLWMVAKMAAVFFVFAMVKA). The Cytoplasmic portion of the chain corresponds to 297–313 (IVPRYRYDQLMRIGWKV). The helical transmembrane segment at 314-333 (FLPLSLAWVVVVAFLAKFEV) threads the bilayer. Over 334–345 (LGGFWARWSIGA) the chain is Lumenal.

This sequence belongs to the complex I subunit 1 family. NDH-1 is composed of 14 different subunits. Subunits NuoA, H, J, K, L, M, N constitute the membrane sector of the complex.

It is found in the cellular chromatophore membrane. The enzyme catalyses a quinone + NADH + 5 H(+)(in) = a quinol + NAD(+) + 4 H(+)(out). In terms of biological role, NDH-1 shuttles electrons from NADH, via FMN and iron-sulfur (Fe-S) centers, to quinones in the respiratory chain. The immediate electron acceptor for the enzyme in this species is believed to be ubiquinone. Couples the redox reaction to proton translocation (for every two electrons transferred, four hydrogen ions are translocated across the cytoplasmic membrane), and thus conserves the redox energy in a proton gradient. This subunit may bind ubiquinone. This Rhodobacter capsulatus (Rhodopseudomonas capsulata) protein is NADH-quinone oxidoreductase subunit H.